The sequence spans 605 residues: Beta-hexosaminidase ARB_07893 (605 aa).

The N-terminal stretch at 1 to 18 (MLWIWVPGILGLFGRVEA) is a signal peptide. The N-linked (GlcNAc...) asparagine glycan is linked to Asn-30. Glu-293 acts as the Nucleophile in catalysis. Asn-342 carries N-linked (GlcNAc...) asparagine glycosylation. Glu-374 (proton donor) is an active-site residue. An N-linked (GlcNAc...) asparagine glycan is attached at Asn-449.

This sequence belongs to the glycosyl hydrolase 20 family.

Its subcellular location is the secreted. The enzyme catalyses Hydrolysis of terminal non-reducing N-acetyl-D-hexosamine residues in N-acetyl-beta-D-hexosaminides.. In terms of biological role, beta-hexosaminidase that shows a broad substrate specificity. The chain is Beta-hexosaminidase ARB_07893 from Arthroderma benhamiae (strain ATCC MYA-4681 / CBS 112371) (Trichophyton mentagrophytes).